The chain runs to 74 residues: Alpha-elapitoxin-Aa2d (74 aa).

Disulfide bonds link Cys-3–Cys-21, Cys-14–Cys-42, Cys-27–Cys-31, Cys-46–Cys-57, and Cys-58–Cys-63.

The protein belongs to the three-finger toxin family. Long-chain subfamily. Type II alpha-neurotoxin sub-subfamily. As to expression, expressed by the venom gland.

The protein localises to the secreted. Functionally, binds with high affinity to muscular (alpha-1/CHRNA1) and neuronal (alpha-7/CHRNA7) nicotinic acetylcholine receptor (nAChR) and inhibits acetylcholine from binding to the receptor, thereby impairing neuromuscular and neuronal transmission. The chain is Alpha-elapitoxin-Aa2d from Acanthophis antarcticus (Common death adder).